Here is a 224-residue protein sequence, read N- to C-terminus: Urease accessory protein UreF (224 aa).

This sequence belongs to the UreF family. As to quaternary structure, ureD, UreF and UreG form a complex that acts as a GTP-hydrolysis-dependent molecular chaperone, activating the urease apoprotein by helping to assemble the nickel containing metallocenter of UreC. The UreE protein probably delivers the nickel.

The protein localises to the cytoplasm. Its function is as follows. Required for maturation of urease via the functional incorporation of the urease nickel metallocenter. The protein is Urease accessory protein UreF of Klebsiella pneumoniae (strain 342).